The primary structure comprises 236 residues: Leucyl/phenylalanyl-tRNA--protein transferase (236 aa).

A compositionally biased stretch (polar residues) spans 1–13; that stretch reads MNSLSYLNQDQQS. Residues 1–22 are disordered; sequence MNSLSYLNQDQQSFPPPEQALS.

This sequence belongs to the L/F-transferase family.

It is found in the cytoplasm. The enzyme catalyses N-terminal L-lysyl-[protein] + L-leucyl-tRNA(Leu) = N-terminal L-leucyl-L-lysyl-[protein] + tRNA(Leu) + H(+). It carries out the reaction N-terminal L-arginyl-[protein] + L-leucyl-tRNA(Leu) = N-terminal L-leucyl-L-arginyl-[protein] + tRNA(Leu) + H(+). The catalysed reaction is L-phenylalanyl-tRNA(Phe) + an N-terminal L-alpha-aminoacyl-[protein] = an N-terminal L-phenylalanyl-L-alpha-aminoacyl-[protein] + tRNA(Phe). Its function is as follows. Functions in the N-end rule pathway of protein degradation where it conjugates Leu, Phe and, less efficiently, Met from aminoacyl-tRNAs to the N-termini of proteins containing an N-terminal arginine or lysine. The polypeptide is Leucyl/phenylalanyl-tRNA--protein transferase (Shewanella piezotolerans (strain WP3 / JCM 13877)).